The following is a 279-amino-acid chain: 4-diphosphocytidyl-2-C-methyl-D-erythritol kinase (279 aa).

The active site involves Lys9. ATP is bound at residue 92 to 102 (PLAAGLGGGSS). Asp134 is an active-site residue.

This sequence belongs to the GHMP kinase family. IspE subfamily.

It carries out the reaction 4-CDP-2-C-methyl-D-erythritol + ATP = 4-CDP-2-C-methyl-D-erythritol 2-phosphate + ADP + H(+). It functions in the pathway isoprenoid biosynthesis; isopentenyl diphosphate biosynthesis via DXP pathway; isopentenyl diphosphate from 1-deoxy-D-xylulose 5-phosphate: step 3/6. In terms of biological role, catalyzes the phosphorylation of the position 2 hydroxy group of 4-diphosphocytidyl-2C-methyl-D-erythritol. The sequence is that of 4-diphosphocytidyl-2-C-methyl-D-erythritol kinase from Syntrophus aciditrophicus (strain SB).